A 280-amino-acid chain; its full sequence is Protein MGF 505-3R (280 aa).

It belongs to the asfivirus MGF 505 family.

Plays a role in virus cell tropism, and may be required for efficient virus replication in macrophages. The protein is Protein MGF 505-3R of African swine fever virus (strain Badajoz 1971 Vero-adapted) (Ba71V).